The sequence spans 355 residues: UDP-N-acetylglucosamine--N-acetylmuramyl-(pentapeptide) pyrophosphoryl-undecaprenol N-acetylglucosamine transferase (355 aa).

Residues 14 to 16 (TGG), N126, R162, S190, I245, 264 to 269 (ALTVCE), and Q289 each bind UDP-N-acetyl-alpha-D-glucosamine.

Belongs to the glycosyltransferase 28 family. MurG subfamily.

It is found in the cell inner membrane. It carries out the reaction di-trans,octa-cis-undecaprenyl diphospho-N-acetyl-alpha-D-muramoyl-L-alanyl-D-glutamyl-meso-2,6-diaminopimeloyl-D-alanyl-D-alanine + UDP-N-acetyl-alpha-D-glucosamine = di-trans,octa-cis-undecaprenyl diphospho-[N-acetyl-alpha-D-glucosaminyl-(1-&gt;4)]-N-acetyl-alpha-D-muramoyl-L-alanyl-D-glutamyl-meso-2,6-diaminopimeloyl-D-alanyl-D-alanine + UDP + H(+). It functions in the pathway cell wall biogenesis; peptidoglycan biosynthesis. Functionally, cell wall formation. Catalyzes the transfer of a GlcNAc subunit on undecaprenyl-pyrophosphoryl-MurNAc-pentapeptide (lipid intermediate I) to form undecaprenyl-pyrophosphoryl-MurNAc-(pentapeptide)GlcNAc (lipid intermediate II). The polypeptide is UDP-N-acetylglucosamine--N-acetylmuramyl-(pentapeptide) pyrophosphoryl-undecaprenol N-acetylglucosamine transferase (Mannheimia succiniciproducens (strain KCTC 0769BP / MBEL55E)).